A 354-amino-acid polypeptide reads, in one-letter code: Opsin-5 (354 aa).

The Extracellular segment spans residues 1–33 (MALNHTALPQDERLPHYLRDGDPFASKLSWEAD). N-linked (GlcNAc...) asparagine glycosylation is present at Asn-4. Residues 34–54 (LVAGFYLTIIGILSTFGNGYV) form a helical membrane-spanning segment. Residues 55-74 (LYMSSRRKKKLRPAEIMTIN) lie on the Cytoplasmic side of the membrane. The helical transmembrane segment at 75-95 (LAVCDLGISVVGKPFTIISCF) threads the bilayer. Residues 96 to 108 (CHRWVFGWIGCRW) lie on the Extracellular side of the membrane. Residues Cys-106 and Cys-183 are joined by a disulfide bond. Residues 109-129 (YGWAGFFFGCGSLITMTAVSL) form a helical membrane-spanning segment. Residues 130-150 (DRYLKICYLSYGVWLKRKHAY) are Cytoplasmic-facing. A helical membrane pass occupies residues 151–171 (ICLAAIWAYASFWTTMPLVGL). At 172–197 (GDYVPEPFGTSCTLDWWLAQASVGGQ) the chain is on the extracellular side. Residues 198–218 (VFILNILFFCLLLPTAVIVFS) form a helical membrane-spanning segment. The Cytoplasmic portion of the chain corresponds to 219–252 (YVKIIAKVKSSSKEVAHFDSRIHSSHVLEMKLTK). A helical transmembrane segment spans residues 253–273 (VAMLICAGFLIAWIPYAVVSV). The Extracellular portion of the chain corresponds to 274–288 (WSAFGRPDSIPIQLS). A helical transmembrane segment spans residues 289-309 (VVPTLLAKSAAMYNPIIYQVI). Residue Lys-296 is modified to N6-(retinylidene)lysine. The Cytoplasmic portion of the chain corresponds to 310–353 (DYKFACCQTGGLKATKKKSLEGFRLHTVTTVRKSSAVLEIHEEW). S-palmitoyl cysteine attachment occurs at residues Cys-315 and Cys-316.

The protein belongs to the G-protein coupled receptor 1 family. Opsin subfamily. It is uncertain whether Cys-315 or Cys-316 is palmitoylated. In terms of tissue distribution, detected in brain and retina and cell lines derived from neural retina.

The protein resides in the cell membrane. In terms of biological role, G-protein coupled receptor which selectively activates G(i) type G proteins via ultraviolet A (UVA) light-mediated activation in the retina. Preferentially binds the chromophore 11-cis retinal and is a bistable protein that displays emission peaks at 380 nm (UVA light) and 470 nm (blue light). Required for the light-response in the inner plexiform layer, and contributes to the regulation of the light-response in the nerve fiber layer, via phosphorylated DAT/SLC6A3 dopamine uptake. Involved in local corneal and retinal circadian rhythm photoentrainment via modulation of the UVA light-induced phase-shift of the retina clock. Acts as a circadian photoreceptor in the outer ear, via modulation of circadian clock-gene expression in response to violet light during the light-to-dark transition phase and night phase of the circadian cycle. Required in the retina to negatively regulate hyaloid vessel regression during postnatal development via light-dependent OPN5-SLC32A1-DRD2-VEGFR2 signaling. Involved in the light-dependent regulation of retina and vitreous compartment dopamine levels. This Homo sapiens (Human) protein is Opsin-5 (OPN5).